A 443-amino-acid chain; its full sequence is Exodeoxyribonuclease 7 large subunit (443 aa).

The protein belongs to the XseA family. In terms of assembly, heterooligomer composed of large and small subunits.

The protein resides in the cytoplasm. It catalyses the reaction Exonucleolytic cleavage in either 5'- to 3'- or 3'- to 5'-direction to yield nucleoside 5'-phosphates.. In terms of biological role, bidirectionally degrades single-stranded DNA into large acid-insoluble oligonucleotides, which are then degraded further into small acid-soluble oligonucleotides. This Legionella pneumophila (strain Lens) protein is Exodeoxyribonuclease 7 large subunit.